Here is a 138-residue protein sequence, read N- to C-terminus: MLSPKRTKFRRPHRGNLKGKACRGTKIAFGEYGLQALEPCWITSRQIESGRRVLTRYVRRTGKLWIRIFPDKPITMRPAGTRMGSGKGFPEYWVAVVHPGKILYEIQGVSEPVAKQALKTAAYKMPIKTKFVKVESNP.

Belongs to the universal ribosomal protein uL16 family. Part of the 50S ribosomal subunit.

Its subcellular location is the plastid. The protein localises to the chloroplast. This chain is Large ribosomal subunit protein uL16c, found in Tetradesmus obliquus (Green alga).